The primary structure comprises 177 residues: Large ribosomal subunit protein uL6 (177 aa).

This sequence belongs to the universal ribosomal protein uL6 family. In terms of assembly, part of the 50S ribosomal subunit.

This protein binds to the 23S rRNA, and is important in its secondary structure. It is located near the subunit interface in the base of the L7/L12 stalk, and near the tRNA binding site of the peptidyltransferase center. The chain is Large ribosomal subunit protein uL6 from Rickettsia africae (strain ESF-5).